We begin with the raw amino-acid sequence, 226 residues long: Xanthocillin biosynthesis cluster protein F (226 aa).

It functions in the pathway secondary metabolite biosynthesis. Its function is as follows. Part of the gene cluster that mediates the biosynthesis of the isocyanide xanthocillin and its derivatives. The first step of the pathway consists in the conversion of tyrosine into a vinyl-isonitrile intermediate by the isocyanide synthase xanB. Subsequent oxidative dimerization of this intermediate to form xanthocillin may involve the cytochrome P450 monooxygenase xanG, whose expression is coregulated with that of XanB. Xanthocillin can be further modified by the isonitrile hydratase-like protein xanA which introduces N-formyl groups and the methyltransferase xanE which introduces methyl groups, leading to the production of several derivatives including fumiformamide. Finally, fumiformamide can be subject to both oxidative and reductive cyclization to yield melanocins E and F, respectively. This chain is Xanthocillin biosynthesis cluster protein F, found in Aspergillus fumigatus (strain ATCC MYA-4609 / CBS 101355 / FGSC A1100 / Af293) (Neosartorya fumigata).